The following is a 149-amino-acid chain: UPF0260 protein RCAP_rcc02083 (149 aa).

This sequence belongs to the UPF0260 family.

In Rhodobacter capsulatus (strain ATCC BAA-309 / NBRC 16581 / SB1003), this protein is UPF0260 protein RCAP_rcc02083.